We begin with the raw amino-acid sequence, 674 residues long: YAP1-binding protein 1 (674 aa).

Belongs to the YBP1 family. Interacts with YAP1. Forms a peroxide stress induced complex with YAP1 in the cytoplasm. Systematic proteome-wide 2-hybrid interaction studies suggest that YAP1, HYR1/GPX3, and YBP1 all interact with the nuclear pore complex subunit NUP116, which is involved in nucleocytoplasmic transport.

It is found in the cytoplasm. Involved in oxidative stress response and redox homeostasis. Required for hydrogen peroxide-induced oxidation and nuclear localization (activation) of YAP1. Functions probably in concert with HYP1/GPX3, the actual YAP1 modifying enzyme. YBP1 is not required for HYP1/GPX3-independent, diamide-induced oxidation of YAP1. This is YAP1-binding protein 1 from Saccharomyces cerevisiae (strain ATCC 204508 / S288c) (Baker's yeast).